Here is a 203-residue protein sequence, read N- to C-terminus: Small ribosomal subunit protein uS4c (203 aa).

The S4 RNA-binding domain maps to 91–159 (MRLDNIIFRL…ISKNIEFYQK (69 aa)).

This sequence belongs to the universal ribosomal protein uS4 family. Part of the 30S ribosomal subunit. Contacts protein S5. The interaction surface between S4 and S5 is involved in control of translational fidelity.

The protein resides in the plastid. The protein localises to the chloroplast. Functionally, one of the primary rRNA binding proteins, it binds directly to 16S rRNA where it nucleates assembly of the body of the 30S subunit. With S5 and S12 plays an important role in translational accuracy. This Lopidium concinnum (Moss) protein is Small ribosomal subunit protein uS4c (rps4).